The following is a 114-amino-acid chain: NADH-ubiquinone oxidoreductase chain 3 (114 aa).

A run of 3 helical transmembrane segments spans residues 3–23 (ATIL…SFWL), 54–74 (FFLI…LLPF), and 85–105 (IVIL…IYEW).

It belongs to the complex I subunit 3 family.

The protein localises to the mitochondrion membrane. The catalysed reaction is a ubiquinone + NADH + 5 H(+)(in) = a ubiquinol + NAD(+) + 4 H(+)(out). In terms of biological role, core subunit of the mitochondrial membrane respiratory chain NADH dehydrogenase (Complex I) that is believed to belong to the minimal assembly required for catalysis. Complex I functions in the transfer of electrons from NADH to the respiratory chain. The immediate electron acceptor for the enzyme is believed to be ubiquinone. The protein is NADH-ubiquinone oxidoreductase chain 3 (mt-nd3) of Xenopus laevis (African clawed frog).